The sequence spans 544 residues: Phosphomannomutase (544 aa).

Ser-145 serves as the catalytic Phosphoserine intermediate. Mg(2+)-binding residues include Ser-145, Asp-297, Asp-299, and Asp-301.

The protein belongs to the phosphohexose mutase family. Mg(2+) is required as a cofactor.

It carries out the reaction alpha-D-mannose 1-phosphate = D-mannose 6-phosphate. The sequence is that of Phosphomannomutase (manB) from Mycoplasmoides pirum (Mycoplasma pirum).